The following is a 250-amino-acid chain: Pimeloyl-[acyl-carrier protein] methyl ester esterase (250 aa).

Substrate contacts are provided by residues W12, 71 to 72, and 138 to 142; these read SL and FVALQ. The Nucleophile role is filled by S71. Residues D202 and H230 contribute to the active site. Position 230 (H230) interacts with substrate.

The protein belongs to the AB hydrolase superfamily. Carboxylesterase BioH family. As to quaternary structure, monomer.

Its subcellular location is the cytoplasm. It carries out the reaction 6-carboxyhexanoyl-[ACP] methyl ester + H2O = 6-carboxyhexanoyl-[ACP] + methanol + H(+). The protein operates within cofactor biosynthesis; biotin biosynthesis. Its function is as follows. The physiological role of BioH is to remove the methyl group introduced by BioC when the pimeloyl moiety is complete. It allows to synthesize pimeloyl-ACP via the fatty acid synthetic pathway through the hydrolysis of the ester bonds of pimeloyl-ACP esters. This Aromatoleum aromaticum (strain DSM 19018 / LMG 30748 / EbN1) (Azoarcus sp. (strain EbN1)) protein is Pimeloyl-[acyl-carrier protein] methyl ester esterase.